The following is a 494-amino-acid chain: UDP-N-acetylmuramate--L-alanine ligase (494 aa).

122–128 (GTHGKTT) contributes to the ATP binding site.

It belongs to the MurCDEF family.

Its subcellular location is the cytoplasm. The catalysed reaction is UDP-N-acetyl-alpha-D-muramate + L-alanine + ATP = UDP-N-acetyl-alpha-D-muramoyl-L-alanine + ADP + phosphate + H(+). It functions in the pathway cell wall biogenesis; peptidoglycan biosynthesis. Functionally, cell wall formation. The polypeptide is UDP-N-acetylmuramate--L-alanine ligase (Mycobacterium bovis (strain ATCC BAA-935 / AF2122/97)).